The primary structure comprises 1173 residues: Alpha-mannosidase 2 (1173 aa).

Residues 1 to 21 form a disordered region; it reads MPFSSYIGNSRRSSTGGGTGG. Residues 1–50 are Cytoplasmic-facing; the sequence is MPFSSYIGNSRRSSTGGGTGGWGQSLLPTALSKSKLAINRKPRKRTLVVN. A helical; Signal-anchor transmembrane segment spans residues 51-71; sequence FIFANFFVIALTVSLLFFLLT. Residues 72 to 1173 are Lumenal-facing; it reads LFHFGVPGPI…AYKLELRPHK (1102 aa). N-linked (GlcNAc...) asparagine glycosylation is present at Asn-106. Residues His-162 and Asp-164 each coordinate Zn(2+). A glycan (N-linked (GlcNAc...) asparagine) is linked at Asn-262. Asp-276 lines the Zn(2+) pocket. Asp-276 acts as the Nucleophile in catalysis. N-linked (GlcNAc...) asparagine glycosylation is present at Asn-467. His-564 provides a ligand contact to Zn(2+). N-linked (GlcNAc...) asparagine glycans are attached at residues Asn-675, Asn-772, Asn-782, Asn-991, Asn-1098, and Asn-1108.

It belongs to the glycosyl hydrolase 38 family. In terms of assembly, homodimer; disulfide-linked. Interacts with GALT1. Zn(2+) is required as a cofactor. In terms of processing, glycosylated.

It is found in the golgi apparatus membrane. The catalysed reaction is N(4)-{beta-D-GlcNAc-(1-&gt;2)-alpha-D-Man-(1-&gt;3)-[alpha-D-Man-(1-&gt;3)-[alpha-D-Man-(1-&gt;6)]-alpha-D-Man-(1-&gt;6)]-beta-D-Man-(1-&gt;4)-beta-D-GlcNAc-(1-&gt;4)-beta-D-GlcNAc}-L-asparaginyl-[protein] + 2 H2O = 2 alpha-D-mannopyranose + an N(4)-{beta-D-GlcNAc-(1-&gt;2)-alpha-D-Man-(1-&gt;3)-[alpha-D-Man-(1-&gt;6)]-beta-D-Man-(1-&gt;4)-beta-D-GlcNAc-(1-&gt;4)-beta-D-GlcNAc}-L-asparaginyl-[protein]. It participates in protein modification; protein glycosylation. Its activity is regulated as follows. Inhibited by 1 mM Cu(2+) and by the class II alpha-mannosidase inhibitor swainsonine. Catalyzes the first committed step in the biosynthesis of complex N-glycans. It controls conversion of high mannose to complex N-glycans; the final hydrolytic step in the N-glycan maturation pathway. Converts GlcNAcMan(5)GlcNAc(2) (Man5Gn) into GlcNAcMan(3)GlcNAc(2) (MGn) by sequential removal of two alpha1,6- and alpha1,3-linked mannose residues from the alpha1,6-mannose branch of the substrate. To a lesser extent, also able to cleave beta1,2-xylosylated Man5Gn-glycopeptide (Man5GnX-GP) and pyridylaminated substrates Man5Gn-PA and Man5GnX-PA, but not active toward Man5-glycopeptide. Required for resistance to salt stress. This chain is Alpha-mannosidase 2, found in Arabidopsis thaliana (Mouse-ear cress).